Reading from the N-terminus, the 393-residue chain is Sugar efflux transporter A (393 aa).

12 helical membrane-spanning segments follow: residues 22 to 42 (VIAF…SLFL), 51 to 71 (FMVG…SQIL), 82 to 102 (KTLI…YAWN), 107 to 127 (VLLF…PQLF), 152 to 172 (ISLS…GFGF), 174 to 194 (AMYL…WLLL), 219 to 239 (LLLF…LINM), 253 to 273 (LAGV…LLAG), 287 to 307 (LAVI…GSWA), 308 to 328 (LLAL…MGML), 344 to 364 (LFTN…GIVA), and 366 to 386 (VWSY…AAVC).

It belongs to the major facilitator superfamily. Set transporter family.

It is found in the cell inner membrane. In terms of biological role, involved in the efflux of sugars. The physiological role may be the reduction of the intracellular concentration of toxic sugars or sugar metabolites. Transports IPTG, lactose and arabinose. This is Sugar efflux transporter A (sotA) from Dickeya chrysanthemi (Pectobacterium chrysanthemi).